We begin with the raw amino-acid sequence, 179 residues long: Ribosome maturation factor RimM (179 aa).

The PRC barrel domain occupies 102 to 179 (DGEYYWYQLE…EMKVEWDADF (78 aa)).

This sequence belongs to the RimM family. As to quaternary structure, binds ribosomal protein uS19.

It is found in the cytoplasm. In terms of biological role, an accessory protein needed during the final step in the assembly of 30S ribosomal subunit, possibly for assembly of the head region. Essential for efficient processing of 16S rRNA. May be needed both before and after RbfA during the maturation of 16S rRNA. It has affinity for free ribosomal 30S subunits but not for 70S ribosomes. This is Ribosome maturation factor RimM from Pseudomonas syringae pv. tomato (strain ATCC BAA-871 / DC3000).